We begin with the raw amino-acid sequence, 351 residues long: Holliday junction branch migration complex subunit RuvB (351 aa).

Residues 1–22 (MSDPKANRMVSPERRSDDVGDT) are disordered. A large ATPase domain (RuvB-L) region spans residues 2 to 185 (SDPKANRMVS…FGIPVRLNFY (184 aa)). ATP is bound by residues Leu-24, Arg-25, Gly-66, Lys-69, Thr-70, Thr-71, 132–134 (EDF), Arg-175, Tyr-185, and Arg-222. Thr-70 is a Mg(2+) binding site. The small ATPAse domain (RuvB-S) stretch occupies residues 186-256 (TIEELESIVS…IADHALSALE (71 aa)). The segment at 259–351 (AAGLDAMDRR…GLFGTDESDD (93 aa)) is head domain (RuvB-H). 3 residues coordinate DNA: Arg-295, Arg-314, and Arg-319.

It belongs to the RuvB family. In terms of assembly, homohexamer. Forms an RuvA(8)-RuvB(12)-Holliday junction (HJ) complex. HJ DNA is sandwiched between 2 RuvA tetramers; dsDNA enters through RuvA and exits via RuvB. An RuvB hexamer assembles on each DNA strand where it exits the tetramer. Each RuvB hexamer is contacted by two RuvA subunits (via domain III) on 2 adjacent RuvB subunits; this complex drives branch migration. In the full resolvosome a probable DNA-RuvA(4)-RuvB(12)-RuvC(2) complex forms which resolves the HJ.

The protein localises to the cytoplasm. The catalysed reaction is ATP + H2O = ADP + phosphate + H(+). In terms of biological role, the RuvA-RuvB-RuvC complex processes Holliday junction (HJ) DNA during genetic recombination and DNA repair, while the RuvA-RuvB complex plays an important role in the rescue of blocked DNA replication forks via replication fork reversal (RFR). RuvA specifically binds to HJ cruciform DNA, conferring on it an open structure. The RuvB hexamer acts as an ATP-dependent pump, pulling dsDNA into and through the RuvAB complex. RuvB forms 2 homohexamers on either side of HJ DNA bound by 1 or 2 RuvA tetramers; 4 subunits per hexamer contact DNA at a time. Coordinated motions by a converter formed by DNA-disengaged RuvB subunits stimulates ATP hydrolysis and nucleotide exchange. Immobilization of the converter enables RuvB to convert the ATP-contained energy into a lever motion, pulling 2 nucleotides of DNA out of the RuvA tetramer per ATP hydrolyzed, thus driving DNA branch migration. The RuvB motors rotate together with the DNA substrate, which together with the progressing nucleotide cycle form the mechanistic basis for DNA recombination by continuous HJ branch migration. Branch migration allows RuvC to scan DNA until it finds its consensus sequence, where it cleaves and resolves cruciform DNA. This is Holliday junction branch migration complex subunit RuvB from Bradyrhizobium diazoefficiens (strain JCM 10833 / BCRC 13528 / IAM 13628 / NBRC 14792 / USDA 110).